The chain runs to 530 residues: TNF receptor-associated factor 6 (530 aa).

Residues 1-362 (MSLLNCENSC…EAQQCNGIYI (362 aa)) form an interaction with TAX1BP1 region. An RING-type zinc finger spans residues 70-109 (CPICLMALREAVQTPCGHRFCKACIIKSIRDAGHKCPVDN). Lys-124 participates in a covalent cross-link: Glycyl lysine isopeptide (Lys-Gly) (interchain with G-Cter in SUMO); alternate. Lys-124 is covalently cross-linked (Glycyl lysine isopeptide (Lys-Gly) (interchain with G-Cter in ubiquitin); alternate). Lys-142 is covalently cross-linked (Glycyl lysine isopeptide (Lys-Gly) (interchain with G-Cter in SUMO)). TRAF-type zinc fingers lie at residues 150-202 (DHQV…EEKE) and 203-259 (IHDQ…NHLA). The stretch at 299-356 (EDPNYEETIKQLESRLVRQDHQIRELTAKMETQSMYVGELKRTIRTLEDKVAEMEAQQ) forms a coiled coil. A Glycyl lysine isopeptide (Lys-Gly) (interchain with G-Cter in ubiquitin) cross-link involves residue Lys-327. The 150-residue stretch at 358–507 (NGIYIWKIGN…DDTLLVRCEV (150 aa)) folds into the MATH domain. Residues 363-530 (WKIGNFGMHL…FQPRSTDAGV (168 aa)) are interaction with TANK. Residue Lys-461 forms a Glycyl lysine isopeptide (Lys-Gly) (interchain with G-Cter in SUMO) linkage.

Belongs to the TNF receptor-associated factor family. A subfamily. As to quaternary structure, homotrimer. Homooligomer. N-terminal region is dimeric while C-terminal region is trimeric; maybe providing a mode of oligomerization. Upon IL1B treatment, forms a complex with PELI1, IRAK1, IRAK4 and MYD88; this complex recruits MAP3K7/TAK1, TAB1 and TAB2 to mediate NF-kappa-B activation. Direct binding of SMAD6 to PELI1 prevents the complex formation and hence negatively regulates IL1R-TLR signaling and eventually NF-kappa-B-mediated gene expression. Binds to TNFRSF5/CD40 and TNFRSF11A/RANK. Associates with NGFR, TNFRSF17, IRAK2, IRAK3, PELI2, PELI3, RIPK2, MAP3K1, MAP3K5, MAP3K14, CSK, TRAF, TRAF-interacting protein TRIP and TNF receptor associated protein TDP2. Binds UBE2V1. Interacts with MAVS/IPS1. Interacts with TAX1BP1; this interaction mediates deubiquitination of TRAF6 and inhibition of NF-kappa-B activation. Interacts with IL17R. Interacts with SQSTM1 bridging NTRK1 and NGFR. Forms a ternary complex with SQSTM1 and PRKCZ. Interacts with IL1RL1. Interacts with AJUBA. Interacts with TRAFD1. Interacts with TICAM2. Interacts with ZFAND5. Interacts with ARRB1 and ARRB2. Interacts with MAP3K7 and TAB1/MAP3K7IP1; during IL-1 signaling. Interacts with UBE2N. Interacts with TGFBR1, HDAC1 and RANGAP1. Interacts with AKT1, AKT2 and AKT3. Interacts (via TRAF domains) with NUMBL (via C-terminal). Interacts (via TRAF domains) with DYNC2I2 (via WD domains). Interacts with RBCK1. Interacts with LIMD1 (via LIM domains). Interacts with RSAD2/viperin. Interacts with IFIT3 (via N-terminus). Interacts (via C-terminus) with EIF2AK2/PKR (via the kinase catalytic domain). Interacts with CARD14. Interacts with CD40 and MAP3K8; the interaction is required for ERK activation. Interacts with TICAM1 and this interaction is enhanced in the presence of WDFY1. Interacts with TANK; this interaction increases in response to DNA damage. Interacts with USP10; this interaction increases in response to DNA damage. Interacts with ZC3H12A; this interaction increases in response to DNA damage and is stimulated by TANK. Interacts with WDFY3. Interacts with TRIM13. Interacts with GPS2. Interacts (via C-terminus) with SASH1. Interacts with LRRC19. Interacts with IL17RA and TRAF3IP2. Interacts with TOMM70. Interacts with AMBRA1; interaction is required to mediate 'Lys-63'-linked ubiquitination of ULK1. Interacts with CRBN; this interaction inhibits TLR4-mediated signaling by preventing TRAF6-mediated ubiquitination of ECSIT. In terms of assembly, (Microbial infection) Interacts (via N-terminal RING domain) with Toxoplasma gondii GRA7; the interaction plays a role in GRA7-induced pro-inflammatory cytokine production in mouse macrophages. Post-translationally, sumoylated on Lys-124, Lys-142 and Lys-461 with SUMO1. In terms of processing, polyubiquitinated on Lys-124 by TRAF3IP2; after cell stimulation with IL17A. Polyubiquitinated; after cell stimulation with IL1B or TGFB. This ligand-induced cell stimulation leads to dimerization/oligomerization of TRAF6 molecules, followed by auto-ubiquitination which involves UBE2N and UBE2V1 and leads to TRAF6 activation. This 'Lys-63' site-specific poly-ubiquitination appears to be associated with the activation of signaling molecules. Endogenous autoubiquitination occurs only for the cytoplasmic form. Deubiquitinated by USP10 in a TANK-dependent manner, leading to the negative regulation of NF-kappa-B signaling upon DNA damage. LRRC19 induces 'Lys-63' ubiquitination. Ubiquitinated at Lys-327 by the SCF(FBXL2) complex, leading to its degradation by the proteasome. Highly expressed in brain, lung, liver, skeletal muscle, and kidney; lower expression in heart, spleen, and testis.

Its subcellular location is the cytoplasm. It is found in the cell cortex. It localises to the nucleus. The protein localises to the lipid droplet. It carries out the reaction S-ubiquitinyl-[E2 ubiquitin-conjugating enzyme]-L-cysteine + [acceptor protein]-L-lysine = [E2 ubiquitin-conjugating enzyme]-L-cysteine + N(6)-ubiquitinyl-[acceptor protein]-L-lysine.. The protein operates within protein modification; protein ubiquitination. In terms of biological role, E3 ubiquitin ligase that, together with UBE2N and UBE2V1, mediates the synthesis of 'Lys-63'-linked-polyubiquitin chains conjugated to proteins, such as ECSIT, IKBKG, IRAK1, AKT1 and AKT2. Also mediates ubiquitination of free/unanchored polyubiquitin chain that leads to MAP3K7 activation. Leads to the activation of NF-kappa-B and JUN. Seems to also play a role in dendritic cells (DCs) maturation and/or activation. Represses c-Myb-mediated transactivation, in B-lymphocytes. Adapter protein that seems to play a role in signal transduction initiated via TNF receptor, IL-1 receptor and IL-17 receptor. Regulates osteoclast differentiation by mediating the activation of adapter protein complex 1 (AP-1) and NF-kappa-B, in response to RANK-L stimulation. Together with MAP3K8, mediates CD40 signals that activate ERK in B-cells and macrophages, and thus may play a role in the regulation of immunoglobulin production. Acts as a regulator of the JNK and NF-kappa-B signaling pathways by initiating assembly of heterotypic 'Lys-63'-/'Lys-48'-linked branched ubiquitin chains that are then recognized by TAB2: TRAF6 catalyzes initial 'Lys-63'-linked-polyubiquitin chains that are then branched via 'Lys-48'-linked polyubiquitin by HUWE1. 'Lys-63'-/'Lys-48'-linked branched ubiquitin chains protect 'Lys-63'-linkages from CYLD deubiquitination. Also participates in the TCR signaling by ubiquitinating LAT. The sequence is that of TNF receptor-associated factor 6 (Traf6) from Mus musculus (Mouse).